The following is a 591-amino-acid chain: Potassium channel KAT4 (591 aa).

Residues 1 to 32 (MAARSELLRPAFGEASPSLGRFVINPHSCSYR) are Cytoplasmic-facing. Residues 33–53 (WWHMFLIMLVLYSAWASPFEL) form a helical membrane-spanning segment. The Extracellular portion of the chain corresponds to 54–63 (SMEKAASIAL). The helical transmembrane segment at 64-84 (VVTDLVVDVFFAIDIALSFFV) threads the bilayer. Residues 85–109 (AYRDTSTGLLITDRRKITMRYLKRP) are Cytoplasmic-facing. Residues 110-130 (CFALDVASTIPLQIIYQLVTG) traverse the membrane as a helical segment. At 131 to 137 (KRQGLWG) the chain is on the extracellular side. A helical; Voltage-sensor membrane pass occupies residues 138–158 (LLNLLRLWRLRRVSKLFARVE). Residues 159-172 (KDIRFNYLWTRLIK) are Cytoplasmic-facing. The helical transmembrane segment at 173-193 (LLCVTLFALHFAACIYLWMAF) threads the bilayer. Residues 194–220 (NYKIKELTWIGSQIHSFEDRSVWFCYT) lie on the Extracellular side of the membrane. Residues 221 to 240 (CAVYWSITTLATVGYGDLHA) constitute an intramembrane region (pore-forming). The Extracellular segment spans residues 241–246 (TNIGEM). A helical transmembrane segment spans residues 247-267 (LFSIAFMLFNMGLTSYIIGNI). Residues 268–591 (TNLVVRETSN…IRDGDHLLFS (324 aa)) lie on the Cytoplasmic side of the membrane. A nucleoside 3',5'-cyclic phosphate is bound at residue 349-469 (LFQGVSDSLI…YIVFSNFIQY (121 aa)). Positions 521-591 (RVVIHEQLPN…IRDGDHLLFS (71 aa)) constitute a KHA domain.

It belongs to the potassium channel family. Plant (TC 1.A.1.4) subfamily.

The protein localises to the membrane. Its function is as follows. Probable inward-rectifying potassium channel. Assuming opened or closed conformations in response to the voltage difference across the membrane, the channel is activated by hyperpolarization. The sequence is that of Potassium channel KAT4 from Oryza sativa subsp. japonica (Rice).